A 78-amino-acid polypeptide reads, in one-letter code: Large ribosomal subunit protein eL20 (78 aa).

It belongs to the eukaryotic ribosomal protein eL20 family. In terms of assembly, part of the 50S ribosomal subunit. Binds 23S rRNA.

In Methanothermobacter thermautotrophicus (strain ATCC 29096 / DSM 1053 / JCM 10044 / NBRC 100330 / Delta H) (Methanobacterium thermoautotrophicum), this protein is Large ribosomal subunit protein eL20.